The primary structure comprises 192 residues: Potassium-transporting ATPase KdpC subunit (192 aa).

The chain crosses the membrane as a helical span at residues Pro7–Met27.

The protein belongs to the KdpC family. As to quaternary structure, the system is composed of three essential subunits: KdpA, KdpB and KdpC.

The protein resides in the cell inner membrane. Its function is as follows. Part of the high-affinity ATP-driven potassium transport (or Kdp) system, which catalyzes the hydrolysis of ATP coupled with the electrogenic transport of potassium into the cytoplasm. This subunit acts as a catalytic chaperone that increases the ATP-binding affinity of the ATP-hydrolyzing subunit KdpB by the formation of a transient KdpB/KdpC/ATP ternary complex. This Paraburkholderia phytofirmans (strain DSM 17436 / LMG 22146 / PsJN) (Burkholderia phytofirmans) protein is Potassium-transporting ATPase KdpC subunit.